Consider the following 514-residue polypeptide: ATP synthase subunit alpha (514 aa).

170–177 lines the ATP pocket; it reads GDRQIGKT.

It belongs to the ATPase alpha/beta chains family. In terms of assembly, F-type ATPases have 2 components, CF(1) - the catalytic core - and CF(0) - the membrane proton channel. CF(1) has five subunits: alpha(3), beta(3), gamma(1), delta(1), epsilon(1). CF(0) has three main subunits: a(1), b(2) and c(9-12). The alpha and beta chains form an alternating ring which encloses part of the gamma chain. CF(1) is attached to CF(0) by a central stalk formed by the gamma and epsilon chains, while a peripheral stalk is formed by the delta and b chains.

It localises to the cell inner membrane. The enzyme catalyses ATP + H2O + 4 H(+)(in) = ADP + phosphate + 5 H(+)(out). Its function is as follows. Produces ATP from ADP in the presence of a proton gradient across the membrane. The alpha chain is a regulatory subunit. The protein is ATP synthase subunit alpha of Pseudomonas putida (strain ATCC 700007 / DSM 6899 / JCM 31910 / BCRC 17059 / LMG 24140 / F1).